Reading from the N-terminus, the 311-residue chain is Ribosomal RNA small subunit methyltransferase H (311 aa).

S-adenosyl-L-methionine-binding positions include 35 to 37 (GGH), D55, F80, D102, and Q109.

It belongs to the methyltransferase superfamily. RsmH family.

The protein resides in the cytoplasm. The catalysed reaction is cytidine(1402) in 16S rRNA + S-adenosyl-L-methionine = N(4)-methylcytidine(1402) in 16S rRNA + S-adenosyl-L-homocysteine + H(+). Its function is as follows. Specifically methylates the N4 position of cytidine in position 1402 (C1402) of 16S rRNA. The chain is Ribosomal RNA small subunit methyltransferase H from Pseudoalteromonas atlantica (strain T6c / ATCC BAA-1087).